The chain runs to 282 residues: Putative phosphoenolpyruvate synthase regulatory protein (282 aa).

161 to 168 serves as a coordination point for ADP; it reads GVSRSGKT.

Belongs to the pyruvate, phosphate/water dikinase regulatory protein family. PSRP subfamily.

The catalysed reaction is [pyruvate, water dikinase] + ADP = [pyruvate, water dikinase]-phosphate + AMP + H(+). The enzyme catalyses [pyruvate, water dikinase]-phosphate + phosphate + H(+) = [pyruvate, water dikinase] + diphosphate. Functionally, bifunctional serine/threonine kinase and phosphorylase involved in the regulation of the phosphoenolpyruvate synthase (PEPS) by catalyzing its phosphorylation/dephosphorylation. This Janthinobacterium sp. (strain Marseille) (Minibacterium massiliensis) protein is Putative phosphoenolpyruvate synthase regulatory protein.